We begin with the raw amino-acid sequence, 372 residues long: PqqA peptide cyclase (372 aa).

Residues 4 to 220 (APPPLSVLLE…ETARRQLGDR (217 aa)) form the Radical SAM core domain. [4Fe-4S] cluster contacts are provided by Cys-18, Cys-22, and Cys-25. The interval 342 to 372 (ATAEQESASPAPAFIYRRPERPAAATADPLE) is disordered.

This sequence belongs to the radical SAM superfamily. PqqE family. In terms of assembly, interacts with PqqD. The interaction is necessary for activity of PqqE. The cofactor is [4Fe-4S] cluster.

It catalyses the reaction [PQQ precursor protein] + S-adenosyl-L-methionine = E-Y cross-linked-[PQQ precursor protein] + 5'-deoxyadenosine + L-methionine + H(+). Its pathway is cofactor biosynthesis; pyrroloquinoline quinone biosynthesis. Functionally, catalyzes the cross-linking of a glutamate residue and a tyrosine residue in the PqqA protein as part of the biosynthesis of pyrroloquinoline quinone (PQQ). In Xanthomonas euvesicatoria pv. vesicatoria (strain 85-10) (Xanthomonas campestris pv. vesicatoria), this protein is PqqA peptide cyclase.